A 289-amino-acid chain; its full sequence is ATP synthase mitochondrial F1 complex assembly factor 2 (289 aa).

The N-terminal 40 residues, 1–40, are a transit peptide targeting the mitochondrion; the sequence is MWRRCLRLRDVGRRLLNLPRSGLTASEGLGPKLPTPIRAY. Residue Lys-133 is modified to N6-succinyllysine.

This sequence belongs to the ATP12 family. Interacts with ATP5F1B; involved in the assembly of the F1 component of the mitochondrial ATP synthase (ATPase). Interacts with FMC1.

The protein localises to the mitochondrion inner membrane. Plays a role in the assembly of the F1 component of the mitochondrial ATP synthase (ATPase). The protein is ATP synthase mitochondrial F1 complex assembly factor 2 (ATPAF2) of Bos taurus (Bovine).